The chain runs to 226 residues: Ribonuclease 3 (226 aa).

Residues Met-6 to Asn-128 enclose the RNase III domain. Glu-41 is a binding site for Mg(2+). Residue Asp-45 is part of the active site. Mg(2+) contacts are provided by Asn-114 and Glu-117. Glu-117 is a catalytic residue. The DRBM domain occupies Asp-155–Val-225.

The protein belongs to the ribonuclease III family. In terms of assembly, homodimer. The cofactor is Mg(2+).

The protein resides in the cytoplasm. The enzyme catalyses Endonucleolytic cleavage to 5'-phosphomonoester.. Its function is as follows. Digests double-stranded RNA. Involved in the processing of primary rRNA transcript to yield the immediate precursors to the large and small rRNAs (23S and 16S). Processes some mRNAs, and tRNAs when they are encoded in the rRNA operon. Processes pre-crRNA and tracrRNA of type II CRISPR loci if present in the organism. The polypeptide is Ribonuclease 3 (Buchnera aphidicola subsp. Cinara cedri (strain Cc)).